A 175-amino-acid chain; its full sequence is Flagellar assembly factor FliW (175 aa).

This sequence belongs to the FliW family. In terms of assembly, interacts with translational regulator CsrA and flagellin(s).

It localises to the cytoplasm. Acts as an anti-CsrA protein, binds CsrA and prevents it from repressing translation of its target genes, one of which is flagellin. Binds to flagellin and participates in the assembly of the flagellum. The protein is Flagellar assembly factor FliW of Bdellovibrio bacteriovorus (strain ATCC 15356 / DSM 50701 / NCIMB 9529 / HD100).